The primary structure comprises 460 residues: Antizyme inhibitor 2 (460 aa).

The necessary for polyamine uptake stimulation stretch occupies residues 117-140 (QIAQIKYAAKHGIQLLSFDNEMEL).

The protein belongs to the Orn/Lys/Arg decarboxylase class-II family. ODC antizyme inhibitor subfamily. In terms of assembly, monomer. Interacts with OAZ1, OAZ2 and OAZ3; this interaction disrupts the interaction between the antizyme and ODC1. Does not form a heterodimer with ODC1. In terms of processing, ubiquitinated, leading to its proteasomal degradation; a process that is reduced in presence of antizymes. May also be degraded through the lysosomal degradative pathway in a proteasomal-independent manner. In terms of tissue distribution, expressed in the neocortex, thalamus, hippocampus, cerebellum, medulla oblongata, gray and white matter. Expressed in neurons, oligodendrocytes, basket, Purkinje and pyramidal cells. Expressed in spermatocytes and Leydig cells of the testis. Expressed in luteal theca cells lining corpus luteum cysts and in hilus cells of the ovary. Expressed in primary and neoplastic mast cells (MC) (at protein level). Highly expressed in brain. Also expressed in testis.

It localises to the nucleus. The protein localises to the cytoplasm. Its subcellular location is the perinuclear region. It is found in the membrane. The protein resides in the cytoplasmic vesicle. It localises to the endoplasmic reticulum-Golgi intermediate compartment. The protein localises to the golgi apparatus. Its subcellular location is the cis-Golgi network. It is found in the trans-Golgi network. The protein resides in the cytoplasmic granule. It localises to the cell projection. The protein localises to the axon. Its subcellular location is the dendrite. It is found in the perikaryon. Its function is as follows. Antizyme inhibitor (AZI) protein that positively regulates ornithine decarboxylase (ODC) activity and polyamine uptake. AZI is an enzymatically inactive ODC homolog that counteracts the negative effect of ODC antizymes (AZs) OAZ1, OAZ2 and OAZ3 on ODC activity by competing with ODC for antizyme-binding. Inhibits antizyme-dependent ODC degradation and releases ODC monomers from their inactive complex with antizymes, leading to formation of the catalytically active ODC homodimer and restoring polyamine production. Participates in the morphological integrity of the trans-Golgi network (TGN) and functions as a regulator of intracellular secretory vesicle trafficking. This chain is Antizyme inhibitor 2 (AZIN2), found in Homo sapiens (Human).